The chain runs to 242 residues: Probable ABC transporter ATP-binding protein PEB1C (242 aa).

The ABC transporter domain occupies 2–236 (IELKNVNKYY…PKTERARLFL (235 aa)). ATP is bound at residue 34 to 41 (GPSGSGKS).

It belongs to the ABC transporter superfamily.

It is found in the cell inner membrane. Functionally, most probably involved, with PEB1, in a binding-protein-dependent transport system for an amino acid. Probably responsible for energy coupling to the transport system. The chain is Probable ABC transporter ATP-binding protein PEB1C (peb1C) from Campylobacter jejuni subsp. jejuni serotype O:2 (strain ATCC 700819 / NCTC 11168).